The sequence spans 450 residues: MGAPPGYRPSAWVHLLHQLPRADFQLRPVPSGFAPRDQEYQQALLLVAALAGLGLGLSLIFIAVYLIRFCCCRPPEPPGAKSPPPGGGCVTWSCIAALLVGCAGIGIGFYGNSETSDGVSQLSSALQHANHTLSTIDDLVLETVERLGEAVRTELTTLEEVLSERVELVAATRGARRQAEAAAQHLQGLAFWQGVSLSPVQVAEDVTFVEEYRWLAYVLLLLLVLLVCLFTLLGLAKQSKWLVVVMTAMSLLVLVLSWGSMGLEAATAVGLSDFCSNPDTYVLNLTQEETGISSDILNYYFLCNQAVSNPFQQRLTLSQRALASIHSQLQGLEREASPQFPAAQKPLLSLEETLNVTERSFHQLVALLHCRSLHKDYGSALRGLCEDALEGLLFLMLFSLLSAGALATTLCSLPRAWALFPPSDDYDDTDDDDPFNPQESKRFVQWQSSI.

The Extracellular portion of the chain corresponds to Met-1 to Ala-43. The chain crosses the membrane as a helical span at residues Leu-44–Val-64. The Cytoplasmic segment spans residues Tyr-65–Gly-88. A helical transmembrane segment spans residues Cys-89–Phe-109. Residues Tyr-110–Trp-214 lie on the Extracellular side of the membrane. N-linked (GlcNAc...) asparagine glycosylation occurs at Asn-130. The helical transmembrane segment at Leu-215–Leu-235 threads the bilayer. Residues Ala-236–Lys-240 lie on the Cytoplasmic side of the membrane. Residues Trp-241–Met-261 form a helical membrane-spanning segment. Residues Gly-262–Glu-390 are Extracellular-facing. 2 cysteine pairs are disulfide-bonded: Cys-275-Cys-385 and Cys-303-Cys-370. N-linked (GlcNAc...) asparagine glycans are attached at residues Asn-284 and Asn-355. A helical transmembrane segment spans residues Gly-391–Cys-411. Residues Ser-412–Ile-450 are Cytoplasmic-facing. A disordered region spans residues Asp-428–Ile-450. Position 440 is a phosphoserine (Ser-440).

This sequence belongs to the tweety family. As to quaternary structure, homotetramer; disulfide-linked. Homodimer. Post-translationally, N-glycosylated. Contains high-mannose, hybrid and complex oligosaccharides.

It localises to the cell membrane. It catalyses the reaction chloride(in) = chloride(out). The catalysed reaction is L-glutamate(out) = L-glutamate(in). In terms of biological role, calcium-independent, swelling-dependent volume-regulated anion channel (VRAC-swell) which plays a pivotal role in the process of regulatory volume decrease (RVD) in the brain through the efflux of anions like chloride and organic osmolytes like glutamate. The polypeptide is Protein tweety homolog 1 (Ttyh1) (Rattus norvegicus (Rat)).